Here is a 216-residue protein sequence, read N- to C-terminus: Heart- and neural crest derivatives-expressed protein 1 (216 aa).

Disordered regions lie at residues 1 to 20, 53 to 109, and 165 to 203; these read MNLV…HPPH, APDF…RTES, and ELKK…KGRT. Over residues 8 to 18 the composition is skewed to basic residues; sequence AHHHHHHHSHP. The segment covering 65-78 has biased composition (low complexity); sequence TAVAAAAYGPDARP. A compositionally biased stretch (basic residues) spans 92–104; it reads LPKRKGSGPKKER. One can recognise a bHLH domain in the interval 94 to 146; sequence KRKGSGPKKERRRTESINSAFAELRECIPNVPADTKLSKIKTLRLATSYIAYL. T107 carries the post-translational modification Phosphothreonine; by PLK4. The residue at position 109 (S109) is a Phosphoserine; by PLK4. Over residues 165–174 the composition is skewed to basic and acidic residues; it reads ELKKTDGGRE.

As to quaternary structure, efficient DNA binding requires dimerization with another bHLH protein. Forms homodimers and heterodimers with TCF3 gene products E12 and E47, HAND2 and HEY1, HEY2 and HEYL (hairy-related transcription factors). Interacts with MDFIC. Interacts with SOX15; the interaction enhances HAND1-induced differentiation of trophoblast giant cells. Post-translationally, phosphorylation by PLK4 disrupts the interaction with MDFIC and leads to translocation into the nucleoplasm, allowing dimerization and transcription factor activity. As to expression, smooth muscle cells of the gut and adrenal tissue.

The protein localises to the nucleus. It localises to the nucleoplasm. It is found in the nucleolus. Its function is as follows. Transcription factor that plays an essential role in both trophoblast giant cell differentiation and in cardiac morphogenesis. Binds the DNA sequence 5'-NRTCTG-3' (non-canonical E-box). Acts as a transcriptional repressor of SOX15. In the adult, could be required for ongoing expression of cardiac-specific genes. The protein is Heart- and neural crest derivatives-expressed protein 1 (Hand1) of Mus musculus (Mouse).